Reading from the N-terminus, the 370-residue chain is 3-dehydroquinate synthase (370 aa).

Residues 108 to 112 (GVIGD), 132 to 133 (TT), lysine 145, and lysine 154 each bind NAD(+). Zn(2+) is bound by residues glutamate 187, histidine 249, and histidine 267.

The protein belongs to the sugar phosphate cyclases superfamily. Dehydroquinate synthase family. Co(2+) is required as a cofactor. Zn(2+) serves as cofactor. The cofactor is NAD(+).

It is found in the cytoplasm. The catalysed reaction is 7-phospho-2-dehydro-3-deoxy-D-arabino-heptonate = 3-dehydroquinate + phosphate. Its pathway is metabolic intermediate biosynthesis; chorismate biosynthesis; chorismate from D-erythrose 4-phosphate and phosphoenolpyruvate: step 2/7. Its function is as follows. Catalyzes the conversion of 3-deoxy-D-arabino-heptulosonate 7-phosphate (DAHP) to dehydroquinate (DHQ). The protein is 3-dehydroquinate synthase of Cereibacter sphaeroides (strain KD131 / KCTC 12085) (Rhodobacter sphaeroides).